Consider the following 702-residue polypeptide: Ribosomal RNA large subunit methyltransferase K/L (702 aa).

The 112-residue stretch at 43–154 folds into the THUMP domain; sequence LIYQSLMWSR…KETAHISLDL (112 aa).

This sequence belongs to the methyltransferase superfamily. RlmKL family.

Its subcellular location is the cytoplasm. The enzyme catalyses guanosine(2445) in 23S rRNA + S-adenosyl-L-methionine = N(2)-methylguanosine(2445) in 23S rRNA + S-adenosyl-L-homocysteine + H(+). It catalyses the reaction guanosine(2069) in 23S rRNA + S-adenosyl-L-methionine = N(2)-methylguanosine(2069) in 23S rRNA + S-adenosyl-L-homocysteine + H(+). In terms of biological role, specifically methylates the guanine in position 2445 (m2G2445) and the guanine in position 2069 (m7G2069) of 23S rRNA. The protein is Ribosomal RNA large subunit methyltransferase K/L of Enterobacter sp. (strain 638).